The following is a 428-amino-acid chain: BTB/POZ domain-containing protein KCTD16 (428 aa).

Positions glutamate 25–aspartate 98 constitute a BTB domain. At tyrosine 112 the chain carries Phosphotyrosine. Phosphoserine is present on residues serine 130, serine 137, serine 143, and serine 146.

Homopentamer; forms an open pentamer. In contrast to other BTB domain-containing proteins, does not interact with CUL3. Interacts as a tetramer with GABRB1 and GABRB2.

Its subcellular location is the presynaptic cell membrane. It localises to the postsynaptic cell membrane. Functionally, auxiliary subunit of GABA-B receptors that determine the pharmacology and kinetics of the receptor response. Increases agonist potency and markedly alter the G-protein signaling of the receptors by accelerating onset and promoting desensitization. In Homo sapiens (Human), this protein is BTB/POZ domain-containing protein KCTD16 (KCTD16).